The following is a 373-amino-acid chain: ATP phosphoribosyltransferase regulatory subunit (373 aa).

Belongs to the class-II aminoacyl-tRNA synthetase family. HisZ subfamily. As to quaternary structure, heteromultimer composed of HisG and HisZ subunits.

It is found in the cytoplasm. Its pathway is amino-acid biosynthesis; L-histidine biosynthesis; L-histidine from 5-phospho-alpha-D-ribose 1-diphosphate: step 1/9. Its function is as follows. Required for the first step of histidine biosynthesis. May allow the feedback regulation of ATP phosphoribosyltransferase activity by histidine. The chain is ATP phosphoribosyltransferase regulatory subunit from Rhizobium etli (strain CIAT 652).